The sequence spans 941 residues: Putative helicase 121R (941 aa).

Residues 285–323 adopt a coiled-coil conformation; the sequence is LKQELKDIEGENSETIKRNLKDAKDLLKILNKKRANEYN. Residues 492–514 form a disordered region; the sequence is DDSGRDSEEDSQEEEVSSSQEQL. Residues 498-507 show a composition bias toward acidic residues; sequence SEEDSQEEEV. An SF3 helicase domain is found at 609-791; that stretch reads EEVLELYNFL…FVAREKCPET (183 aa). 653–660 contacts ATP; sequence GNGNNGKS.

The protein belongs to the IIV-6 184L family.

In Invertebrate iridescent virus 3 (IIV-3), this protein is Putative helicase 121R.